The sequence spans 884 residues: MDPALLTPMMQHYVELKRQYPHAILLYRLGDFYEMFFQDAQRVSRELELVLTGREAGAIGRVPMCGIPYHAFDRYAAQLVAKGYALAVCDQMEPADQAKGLVRREVTRVITPGTVLEEELLQARQNNYLAAVVRLKGSKQAPCRWGLAYADISTGEFWVCQSEGQEQLEQELARLQPAEVLLPTEEGLGLGLIRPGDPQKPLGLPNQYAYTLRPAEPFELAVARENLMQTYGLRSLEGLGCEGLPLAVRAAGGLLHYLEETHSPQRCVAPKTLLQPSPQGGHPLLPPPRTYQLTDYLILDAQTRRNLELTQTIREGAFVGSLLWVLDHSRTAMGGRTLRRWLLQPLRDSEQIRLRQDTIQELLENPSLRARLGSLLDSLYDLERLANRVGSGTANPRELVALGSSLGKLPQLAELVGEAKTPLLQSLQQVDPALVDLGRRIEHTLLPSPPPILTEGGLIRPGVDPELDRLRQQVEQDRQWVAQLEKSERDRTGIPTLKVGFNKAFGYYLSISRAKAHQVPKEYIRKQTLTNEERFITPELKEKEARILTAQTDINQREYELFVQLRQEAGSRAEAIRQVAQTLAAVDALFGLAEVAVQQGYTRPLLTTDRRLIIEEGRHPVVEKSLPQGLFVPNSVQLGSPHGPDLIVLTGPNMSGKSTYLRQIGLIQILAQMGSFVPARRAELGLCDRVFTRIGAVDDLATGQSTFMVEMNETANILNHAGERSLVLLDEIGRGTATFDGLSIAWAVAEYLATQVRARTVFATHYHELNQLETLLPNVANFQVVVKELQDRIIFLHQVQPGGADRSYGIEVGRMAGLPQPVIQRAEQVLALVEKHSRIGLGLRNQGKSQPAQKNCKKEPAPNRSPDPAVGDQLSLIPAPLFPD.

651-658 is a binding site for ATP; it reads GPNMSGKS. The tract at residues 843 to 884 is disordered; that stretch reads LRNQGKSQPAQKNCKKEPAPNRSPDPAVGDQLSLIPAPLFPD.

It belongs to the DNA mismatch repair MutS family.

Its function is as follows. This protein is involved in the repair of mismatches in DNA. It is possible that it carries out the mismatch recognition step. This protein has a weak ATPase activity. This chain is DNA mismatch repair protein MutS, found in Synechococcus sp. (strain JA-2-3B'a(2-13)) (Cyanobacteria bacterium Yellowstone B-Prime).